A 56-amino-acid chain; its full sequence is Serine protease inhibitor Kazal-type 1 (56 aa).

In terms of domain architecture, Kazal-like spans 3-56; it reads PQREATCTSEVSGCPKIYNPVCGTDGITYSNECVLCSENKKRQTPVLIQKSGPC. 3 disulfide bridges follow: cysteine 9-cysteine 38, cysteine 16-cysteine 35, and cysteine 24-cysteine 56.

The protein resides in the secreted. Its function is as follows. Serine protease inhibitor which exhibits anti-trypsin activity. In the pancreas, protects against trypsin-catalyzed premature activation of zymogens. In the male reproductive tract, binds to sperm heads where it modulates sperm capacitance by inhibiting calcium uptake and nitrogen oxide (NO) production. This Sus scrofa (Pig) protein is Serine protease inhibitor Kazal-type 1 (SPINK1).